Here is a 134-residue protein sequence, read N- to C-terminus: D-ribose pyranase (134 aa).

H20 functions as the Proton donor in the catalytic mechanism. Residues D28, H101, and 123–125 (YSN) each bind substrate.

This sequence belongs to the RbsD / FucU family. RbsD subfamily. In terms of assembly, homodecamer.

Its subcellular location is the cytoplasm. The enzyme catalyses beta-D-ribopyranose = beta-D-ribofuranose. Its pathway is carbohydrate metabolism; D-ribose degradation; D-ribose 5-phosphate from beta-D-ribopyranose: step 1/2. Its function is as follows. Catalyzes the interconversion of beta-pyran and beta-furan forms of D-ribose. The chain is D-ribose pyranase from Pseudomonas syringae pv. tomato (strain ATCC BAA-871 / DC3000).